Here is a 252-residue protein sequence, read N- to C-terminus: 5-oxoprolinase subunit A (252 aa).

It belongs to the LamB/PxpA family. As to quaternary structure, forms a complex composed of PxpA, PxpB and PxpC.

The enzyme catalyses 5-oxo-L-proline + ATP + 2 H2O = L-glutamate + ADP + phosphate + H(+). Functionally, catalyzes the cleavage of 5-oxoproline to form L-glutamate coupled to the hydrolysis of ATP to ADP and inorganic phosphate. This is 5-oxoprolinase subunit A from Mycobacterium ulcerans (strain Agy99).